A 131-amino-acid chain; its full sequence is Small ribosomal subunit protein uS12 (131 aa).

The interval 1 to 32 is disordered; the sequence is MPTFSQLVRKGRTAPRYKTASPALQGSPQRRG. Residue Asp-89 is modified to 3-methylthioaspartic acid. Residues 110 to 131 form a disordered region; it reads RKQGRSKYGAKRAKGGAAAGKK. Positions 111–131 are enriched in basic residues; sequence KQGRSKYGAKRAKGGAAAGKK.

The protein belongs to the universal ribosomal protein uS12 family. Part of the 30S ribosomal subunit. Contacts proteins S8 and S17. May interact with IF1 in the 30S initiation complex.

Functionally, with S4 and S5 plays an important role in translational accuracy. Interacts with and stabilizes bases of the 16S rRNA that are involved in tRNA selection in the A site and with the mRNA backbone. Located at the interface of the 30S and 50S subunits, it traverses the body of the 30S subunit contacting proteins on the other side and probably holding the rRNA structure together. The combined cluster of proteins S8, S12 and S17 appears to hold together the shoulder and platform of the 30S subunit. The sequence is that of Small ribosomal subunit protein uS12 from Acidobacterium capsulatum (strain ATCC 51196 / DSM 11244 / BCRC 80197 / JCM 7670 / NBRC 15755 / NCIMB 13165 / 161).